A 556-amino-acid chain; its full sequence is Formate--tetrahydrofolate ligase 1 (556 aa).

65–72 (TPAGEGKS) is a binding site for ATP.

Belongs to the formate--tetrahydrofolate ligase family.

The enzyme catalyses (6S)-5,6,7,8-tetrahydrofolate + formate + ATP = (6R)-10-formyltetrahydrofolate + ADP + phosphate. It participates in one-carbon metabolism; tetrahydrofolate interconversion. This is Formate--tetrahydrofolate ligase 1 from Streptococcus pyogenes serotype M1.